The primary structure comprises 218 residues: Ribose-5-phosphate isomerase A (218 aa).

Substrate contacts are provided by residues 28-31 (TGST), 81-84 (DGAD), and 94-97 (KGGG). The active-site Proton acceptor is Glu-103. Lys-121 provides a ligand contact to substrate.

This sequence belongs to the ribose 5-phosphate isomerase family. As to quaternary structure, homodimer.

The enzyme catalyses aldehydo-D-ribose 5-phosphate = D-ribulose 5-phosphate. It participates in carbohydrate degradation; pentose phosphate pathway; D-ribose 5-phosphate from D-ribulose 5-phosphate (non-oxidative stage): step 1/1. In terms of biological role, catalyzes the reversible conversion of ribose-5-phosphate to ribulose 5-phosphate. The polypeptide is Ribose-5-phosphate isomerase A (Vibrio campbellii (strain ATCC BAA-1116)).